The following is a 443-amino-acid chain: Endothelin receptor type B (443 aa).

An N-terminal signal peptide occupies residues 1-26 (MQPLRSLCGRALVALIFACGVAGVQS). At 27–102 (EERGFPPAGA…GPIEIKDTFK (76 aa)) the chain is on the extracellular side. A disordered region spans residues 53–89 (TFWPRGSNASLPRSSSPPQMPKGGRMAGPPARTLTPP). Residues 59-69 (SNASLPRSSSP) show a composition bias toward polar residues. A glycan (N-linked (GlcNAc...) asparagine) is linked at asparagine 60. The chain crosses the membrane as a helical span at residues 103–127 (YINTVVSCLVFVLGIIGNSTLLRII). Residues 128–138 (YKNKCMRNGPN) lie on the Cytoplasmic side of the membrane. Residues 139-164 (ILIASLALGDLLHIIIDIPINVYKLL) form a helical membrane-spanning segment. Over 165-176 (AEDWPFGVEMCK) the chain is Extracellular. Cysteines 175 and 256 form a disulfide. The helical transmembrane segment at 177 to 198 (LVPFIQKASVGITVLSLCALSI) threads the bilayer. Residues 199-219 (DRYRAVASWSRIKGIGVPKWT) lie on the Cytoplasmic side of the membrane. Residues 220–244 (AVEIVLIWVVSVVLAVPEALGFDMI) form a helical membrane-spanning segment. At 245-272 (TTDYKGNRLRICLLHPTQKTAFMQFYKT) the chain is on the extracellular side. Residues 273–297 (AKDWWLFSFYFCLPLAITAFFYTLM) form a helical membrane-spanning segment. Residues 298-325 (TCEMLRKKSGMQIALNDHLKQRREVAKT) are Cytoplasmic-facing. Residue serine 306 is modified to Phosphoserine. Residues 326-351 (VFCLVLVFALCWLPLHLSRILKLTLY) form a helical membrane-spanning segment. Over 352 to 363 (DQNDSNRCELLS) the chain is Extracellular. An N-linked (GlcNAc...) asparagine glycan is attached at asparagine 354. Residues 364–390 (FLLVLDYIGINMASLNSCINPIALYLV) form a helical membrane-spanning segment. Over 391 to 443 (SKRFKNCFKSCLCCWCQSFEEKQSLEEKQSCLKFKANDHGYDNFRSSNKYSSS) the chain is Cytoplasmic. Residues cysteine 403, cysteine 404, and cysteine 406 are each lipidated (S-palmitoyl cysteine). The residue at position 420 (serine 420) is a Phosphoserine. Phosphotyrosine is present on tyrosine 440. A phosphoserine mark is found at serine 441, serine 442, and serine 443.

The protein belongs to the G-protein coupled receptor 1 family. Endothelin receptor subfamily. EDNRB sub-subfamily.

It localises to the cell membrane. Non-specific receptor for endothelin 1, 2, and 3. Mediates its action by association with G proteins that activate a phosphatidylinositol-calcium second messenger system. The protein is Endothelin receptor type B (EDNRB) of Sus scrofa (Pig).